Reading from the N-terminus, the 197-residue chain is Large ribosomal subunit protein uL11 (197 aa).

It belongs to the universal ribosomal protein uL11 family. In terms of assembly, part of the ribosomal stalk of the 50S ribosomal subunit. Interacts with L10 and the large rRNA to form the base of the stalk. L10 forms an elongated spine to which L12 dimers bind in a sequential fashion forming a multimeric L10(L12)X complex. In terms of processing, one or more lysine residues are methylated.

In terms of biological role, forms part of the ribosomal stalk which helps the ribosome interact with GTP-bound translation factors. This chain is Large ribosomal subunit protein uL11, found in Mycoplasmopsis pulmonis (strain UAB CTIP) (Mycoplasma pulmonis).